The primary structure comprises 430 residues: Enolase (430 aa).

Q164 serves as a coordination point for (2R)-2-phosphoglycerate. E208 acts as the Proton donor in catalysis. Residues D245, E288, and D315 each contribute to the Mg(2+) site. Residues K340, R369, S370, and K391 each contribute to the (2R)-2-phosphoglycerate site. K340 functions as the Proton acceptor in the catalytic mechanism.

Belongs to the enolase family. It depends on Mg(2+) as a cofactor.

Its subcellular location is the cytoplasm. The protein resides in the secreted. It localises to the cell surface. It catalyses the reaction (2R)-2-phosphoglycerate = phosphoenolpyruvate + H2O. Its pathway is carbohydrate degradation; glycolysis; pyruvate from D-glyceraldehyde 3-phosphate: step 4/5. Its function is as follows. Catalyzes the reversible conversion of 2-phosphoglycerate (2-PG) into phosphoenolpyruvate (PEP). It is essential for the degradation of carbohydrates via glycolysis. The polypeptide is Enolase (Thermococcus gammatolerans (strain DSM 15229 / JCM 11827 / EJ3)).